The following is a 354-amino-acid chain: Nicotinate-nucleotide--dimethylbenzimidazole phosphoribosyltransferase (354 aa).

The active-site Proton acceptor is the Glu319.

This sequence belongs to the CobT family.

The catalysed reaction is 5,6-dimethylbenzimidazole + nicotinate beta-D-ribonucleotide = alpha-ribazole 5'-phosphate + nicotinate + H(+). It functions in the pathway nucleoside biosynthesis; alpha-ribazole biosynthesis; alpha-ribazole from 5,6-dimethylbenzimidazole: step 1/2. Catalyzes the synthesis of alpha-ribazole-5'-phosphate from nicotinate mononucleotide (NAMN) and 5,6-dimethylbenzimidazole (DMB). The protein is Nicotinate-nucleotide--dimethylbenzimidazole phosphoribosyltransferase of Chlorobium chlorochromatii (strain CaD3).